The sequence spans 327 residues: Trypsin-like protease try-5 (327 aa).

An N-terminal signal peptide occupies residues 1-21; sequence MRPRIIVFLFQVLVVIKGTKL. Residues 43–327 form the Peptidase S1 domain; it reads AAGNTGNPTH…KFIVNFINQA (285 aa). Residues cysteine 73 and cysteine 89 are joined by a disulfide bond. Catalysis depends on charge relay system residues histidine 88 and aspartate 173. A glycan (N-linked (GlcNAc...) asparagine) is linked at asparagine 207. Disulfide bonds link cysteine 242/cysteine 256 and cysteine 266/cysteine 296. Catalysis depends on serine 270, which acts as the Charge relay system.

The protein belongs to the peptidase S1 family. Specifically expressed in the male gonad including the seminal vesicle, the valve region and the vas deferens.

It localises to the secreted. The protein localises to the cytoplasmic vesicle. It is found in the secretory vesicle lumen. In the male gonad, probably maintained inactive by swm-1. Serine protease which, in males, acts as a promoting signal during mating to activate sperm. The protein is Trypsin-like protease try-5 of Caenorhabditis elegans.